The following is a 258-amino-acid chain: Thrombin-like enzyme saxthrombin (258 aa).

The N-terminal stretch at 1 to 18 (MVLIRVLANLLILQLSYA) is a signal peptide. A propeptide spanning residues 19–24 (QKSSEL) is cleaved from the precursor. One can recognise a Peptidase S1 domain in the interval 25 to 249 (VIGGDECNIN…YNHWIQSIIA (225 aa)). Intrachain disulfides connect cysteine 31–cysteine 163, cysteine 50–cysteine 66, cysteine 98–cysteine 256, cysteine 142–cysteine 210, cysteine 174–cysteine 189, and cysteine 200–cysteine 225. Asparagine 44 carries an N-linked (GlcNAc...) asparagine glycan. Catalysis depends on charge relay system residues histidine 65 and aspartate 110. Serine 204 acts as the Charge relay system in catalysis. An N-linked (GlcNAc...) asparagine glycan is attached at asparagine 251.

The protein belongs to the peptidase S1 family. Snake venom subfamily. Monomer. Expressed by the venom gland.

It localises to the secreted. In terms of biological role, thrombin-like snake venom serine protease that shows strong blood coagulation activity in vitro. The sequence is that of Thrombin-like enzyme saxthrombin from Gloydius intermedius (Central Asian pit viper).